The primary structure comprises 453 residues: Glutamyl-tRNA(Gln) amidotransferase subunit A (453 aa).

Catalysis depends on charge relay system residues Lys-53 and Ser-128. Ser-152 functions as the Acyl-ester intermediate in the catalytic mechanism.

This sequence belongs to the amidase family. GatA subfamily. Heterotrimer of A, B and C subunits.

The catalysed reaction is L-glutamyl-tRNA(Gln) + L-glutamine + ATP + H2O = L-glutaminyl-tRNA(Gln) + L-glutamate + ADP + phosphate + H(+). Its function is as follows. Allows the formation of correctly charged Gln-tRNA(Gln) through the transamidation of misacylated Glu-tRNA(Gln) in organisms which lack glutaminyl-tRNA synthetase. The reaction takes place in the presence of glutamine and ATP through an activated gamma-phospho-Glu-tRNA(Gln). In Helicobacter pylori (strain G27), this protein is Glutamyl-tRNA(Gln) amidotransferase subunit A.